A 311-amino-acid chain; its full sequence is ATP synthase gamma chain (311 aa).

A disulfide bridge links cysteine 67 with cysteine 138.

It belongs to the ATPase gamma chain family. F-type ATPases have 2 components, CF(1) - the catalytic core - and CF(0) - the membrane proton channel. CF(1) has five subunits: alpha(3), beta(3), gamma(1), delta(1), epsilon(1). CF(0) has three main subunits: a, b and c.

It is found in the cellular thylakoid membrane. Its activity is regulated as follows. Thiol-modulation by raising the activation threshold of the enzyme upon oxidation of the cysteines, thereby preventing wasteful ATP-hydrolysis. Produces ATP from ADP in the presence of a proton gradient across the membrane. The gamma chain is believed to be important in regulating ATPase activity and the flow of protons through the CF(0) complex. The sequence is that of ATP synthase gamma chain (atpG) from Arthrospira platensis (Spirulina platensis).